Here is a 161-residue protein sequence, read N- to C-terminus: Long arms of the bivalent protein 1 (161 aa).

A PP1 binding motif motif is present at residues Lys72 to Trp75. The tract at residues Gly85 to Ser161 is disordered. Positions Gln97 to Asn115 are enriched in polar residues. Residues Asn120–Thr129 show a composition bias toward basic and acidic residues. Over residues Phe130 to Asp151 the composition is skewed to acidic residues.

In terms of assembly, interacts with gsp-1 and gsp-2; the interaction is direct.

It is found in the chromosome. The protein localises to the nucleus. Its function is as follows. Involved in sister chromatid cohesion during mitosis and meiosis. In association with the gsp-2 phosphatase, it both restricts the localization and antagonizes the function of the air-2 kinase during meiosis I and mitosis to promote chromatid cohesion and spindle attachment. This in turn, drives germ cell immortality. Furthermore, may play a role in ensuring the timely assembly of the synaptonemal complex during prophase I of meiosis. This is Long arms of the bivalent protein 1 from Caenorhabditis elegans.